The sequence spans 928 residues: Tyrosine-protein phosphatase 3 (928 aa).

Residue threonine 75 is modified to Phosphothreonine. The region spanning 111–232 is the Rhodanese domain; it reads PDEKVLLLDV…FKILFPDHIN (122 aa). The segment at 247–307 is disordered; the sequence is KSPKTNLMNS…PRNVLSDSPM (61 aa). Position 248 is a phosphoserine (serine 248). Polar residues-rich tracts occupy residues 249–259 and 265–275; these read PKTNLMNSLHN and TATTPLSSPQM. Positions 280-289 are enriched in basic and acidic residues; the sequence is KVPDDSRSDH. Positions 290 to 307 are enriched in low complexity; sequence SNFSSSPSPRNVLSDSPM. Residues serine 297 and serine 368 each carry the phosphoserine modification. Disordered stretches follow at residues 467–487 and 672–713; these read LTSTSSSTIMPPKFPDVNKVQ and MRKN…NNNN. The Tyrosine-protein phosphatase domain occupies 502–878; the sequence is YKSMLSLESD…IFIYDCLLFY (377 aa). Residues 672 to 691 show a composition bias toward polar residues; sequence MRKNTMGTQNSSLYSAGVQG. The segment covering 692-713 has biased composition (low complexity); the sequence is NSSNYSTDNDNDNDNNNNNNNN. The active-site Phosphocysteine intermediate is cysteine 804.

It belongs to the protein-tyrosine phosphatase family. Non-receptor class subfamily. As to quaternary structure, interacts with HOG1.

The protein resides in the cytoplasm. It carries out the reaction O-phospho-L-tyrosyl-[protein] + H2O = L-tyrosyl-[protein] + phosphate. Its function is as follows. Major phosphatase responsible for tyrosine dephosphorylation of MAP kinases FUS3 and HOG1 to inactivate their activity; it also has important roles, along with MSG5, in the inactivation of FUS3 following pheromone stimulation. This chain is Tyrosine-protein phosphatase 3 (PTP3), found in Saccharomyces cerevisiae (strain ATCC 204508 / S288c) (Baker's yeast).